We begin with the raw amino-acid sequence, 91 residues long: Large ribosomal subunit protein eL37 (91 aa).

4 residues coordinate Zn(2+): Cys19, Cys22, Cys34, and Cys37. A C4-type zinc finger spans residues 19-37; the sequence is CRRCGKSSFHIQKKTCASC.

Belongs to the eukaryotic ribosomal protein eL37 family. Zn(2+) serves as cofactor.

Binds to the 23S rRNA. The sequence is that of Large ribosomal subunit protein eL37 (rpl37) from Dictyostelium discoideum (Social amoeba).